A 378-amino-acid chain; its full sequence is Erythronate-4-phosphate dehydrogenase (378 aa).

Substrate contacts are provided by S45 and T66. Positions 146 and 175 each coordinate NAD(+). Residue R208 is part of the active site. Residue D232 participates in NAD(+) binding. The active site involves E237. The active-site Proton donor is H254. G257 is a binding site for NAD(+). Residue Y258 coordinates substrate.

This sequence belongs to the D-isomer specific 2-hydroxyacid dehydrogenase family. PdxB subfamily. As to quaternary structure, homodimer.

The protein resides in the cytoplasm. The catalysed reaction is 4-phospho-D-erythronate + NAD(+) = (R)-3-hydroxy-2-oxo-4-phosphooxybutanoate + NADH + H(+). It functions in the pathway cofactor biosynthesis; pyridoxine 5'-phosphate biosynthesis; pyridoxine 5'-phosphate from D-erythrose 4-phosphate: step 2/5. Functionally, catalyzes the oxidation of erythronate-4-phosphate to 3-hydroxy-2-oxo-4-phosphonooxybutanoate. This is Erythronate-4-phosphate dehydrogenase from Escherichia coli O127:H6 (strain E2348/69 / EPEC).